Consider the following 384-residue polypeptide: S-adenosylmethionine synthase (384 aa).

His15 provides a ligand contact to ATP. Asp17 provides a ligand contact to Mg(2+). Glu43 contacts K(+). 2 residues coordinate L-methionine: Glu56 and Gln99. A flexible loop region spans residues 99 to 109 (QSADINQGVDR). ATP is bound by residues 164–166 (DAK), 230–231 (RF), Asp239, 245–246 (RK), Ala262, and Lys266. An L-methionine-binding site is contributed by Asp239. Lys270 serves as a coordination point for L-methionine.

Belongs to the AdoMet synthase family. As to quaternary structure, homotetramer; dimer of dimers. Requires Mg(2+) as cofactor. It depends on K(+) as a cofactor.

The protein resides in the cytoplasm. The catalysed reaction is L-methionine + ATP + H2O = S-adenosyl-L-methionine + phosphate + diphosphate. It functions in the pathway amino-acid biosynthesis; S-adenosyl-L-methionine biosynthesis; S-adenosyl-L-methionine from L-methionine: step 1/1. Its function is as follows. Catalyzes the formation of S-adenosylmethionine (AdoMet) from methionine and ATP. The overall synthetic reaction is composed of two sequential steps, AdoMet formation and the subsequent tripolyphosphate hydrolysis which occurs prior to release of AdoMet from the enzyme. This Haemophilus influenzae (strain 86-028NP) protein is S-adenosylmethionine synthase.